The sequence spans 178 residues: Large ribosomal subunit protein uL10 (178 aa).

Belongs to the universal ribosomal protein uL10 family. As to quaternary structure, part of the ribosomal stalk of the 50S ribosomal subunit. The N-terminus interacts with L11 and the large rRNA to form the base of the stalk. The C-terminus forms an elongated spine to which L12 dimers bind in a sequential fashion forming a multimeric L10(L12)X complex.

Forms part of the ribosomal stalk, playing a central role in the interaction of the ribosome with GTP-bound translation factors. The protein is Large ribosomal subunit protein uL10 of Petrotoga mobilis (strain DSM 10674 / SJ95).